Here is a 295-residue protein sequence, read N- to C-terminus: Probable protein phosphatase 2C 54 (295 aa).

A PPM-type phosphatase domain is found at 78–289; sequence GHGVVSVMGR…ENINVIVIDL (212 aa). 4 residues coordinate Mn(2+): Asp-112, Gly-113, Asp-228, and Glu-280.

The protein belongs to the PP2C family. The cofactor is Mg(2+). Mn(2+) serves as cofactor.

It carries out the reaction O-phospho-L-seryl-[protein] + H2O = L-seryl-[protein] + phosphate. The catalysed reaction is O-phospho-L-threonyl-[protein] + H2O = L-threonyl-[protein] + phosphate. In Arabidopsis thaliana (Mouse-ear cress), this protein is Probable protein phosphatase 2C 54.